A 465-amino-acid chain; its full sequence is Uridine kinase-like protein 5 (465 aa).

The uridine kinase stretch occupies residues 26–230 (LKQPFVIGVA…IVQHIRTKLC (205 aa)). Residues 240 to 465 (NIFIISSTFQ…SLSTNLKLRS (226 aa)) form a uracil phosphoribosyltransferase region. GTP-binding positions include Lys-264, Arg-273, and 307–310 (CKRL). Residues Arg-317 and Arg-342 each coordinate 5-phospho-alpha-D-ribose 1-diphosphate. Position 362 (Arg-362) interacts with GTP. 5-phospho-alpha-D-ribose 1-diphosphate contacts are provided by residues Asp-368, 373–376 (SGYS), and Glu-439. Position 438 to 440 (438 to 440 (GEF)) interacts with uracil.

The protein in the N-terminal section; belongs to the uridine kinase family. In the C-terminal section; belongs to the UPRTase family. It depends on Mg(2+) as a cofactor.

The enzyme catalyses UMP + diphosphate = 5-phospho-alpha-D-ribose 1-diphosphate + uracil. It catalyses the reaction cytidine + ATP = CMP + ADP + H(+). It carries out the reaction uridine + ATP = UMP + ADP + H(+). The protein operates within pyrimidine metabolism; UMP biosynthesis via salvage pathway; UMP from uracil: step 1/1. It participates in pyrimidine metabolism; CTP biosynthesis via salvage pathway; CTP from cytidine: step 1/3. Its pathway is pyrimidine metabolism; UMP biosynthesis via salvage pathway; UMP from uridine: step 1/1. With respect to regulation, allosterically activated by GTP. Involved in the pyrimidine salvage pathway. In Arabidopsis thaliana (Mouse-ear cress), this protein is Uridine kinase-like protein 5 (UKL5).